A 571-amino-acid polypeptide reads, in one-letter code: Glutamine--tRNA ligase (571 aa).

The short motif at 35-45 (PEPNGYLHIGH) is the 'HIGH' region element. ATP contacts are provided by residues 36–38 (EPN) and 42–48 (HIGHAKS). L-glutamine is bound by residues aspartate 68 and tyrosine 213. ATP-binding positions include threonine 232, 262 to 263 (RL), and 270 to 272 (LSK). The 'KMSKS' region signature appears at 269–273 (ILSKR).

Belongs to the class-I aminoacyl-tRNA synthetase family. In terms of assembly, monomer.

Its subcellular location is the cytoplasm. The enzyme catalyses tRNA(Gln) + L-glutamine + ATP = L-glutaminyl-tRNA(Gln) + AMP + diphosphate. The sequence is that of Glutamine--tRNA ligase from Buchnera aphidicola subsp. Acyrthosiphon pisum (strain APS) (Acyrthosiphon pisum symbiotic bacterium).